A 313-amino-acid polypeptide reads, in one-letter code: Protease HtpX homolog (313 aa).

The next 2 helical transmembrane spans lie at 7 to 24 (AMLLAFMTALFMAVGYLI) and 29 to 46 (GMMIALVIAAAMNLFSYW). Zn(2+) is bound at residue H130. E131 is an active-site residue. H134 contacts Zn(2+). Transmembrane regions (helical) follow at residues 145-165 (ITATLAGAISMLGNFAFFFGG) and 172-192 (PFGFIGILVAMIVAPLAAMVV). A Zn(2+)-binding site is contributed by E201. Residues 282-313 (GNAPPASLREDEPGADGPWGRSASRARKGPWS) form a disordered region.

Belongs to the peptidase M48B family. The cofactor is Zn(2+).

It is found in the cell inner membrane. This chain is Protease HtpX homolog, found in Chelativorans sp. (strain BNC1).